The primary structure comprises 144 residues: uncharacterized protein (144 aa).

Helical transmembrane passes span 76–96 (LLSA…VTML) and 105–125 (ILRA…VKSY).

This sequence belongs to the RseC family.

Its subcellular location is the cell inner membrane. This is an uncharacterized protein from Haemophilus influenzae (strain ATCC 51907 / DSM 11121 / KW20 / Rd).